The primary structure comprises 129 residues: Follitropin subunit beta (129 aa).

Residues 1–20 (MKTLQFFFLFCCWKAICCNS) form the signal peptide. Intrachain disulfides connect Cys21-Cys69, Cys35-Cys84, Cys38-Cys122, Cys46-Cys100, Cys50-Cys102, and Cys105-Cys112. Residues Asn25 and Asn42 are each glycosylated (N-linked (GlcNAc...) asparagine).

This sequence belongs to the glycoprotein hormones subunit beta family. In terms of assembly, heterodimer. The active follitropin is a heterodimer composed of an alpha chain/CGA shared with other hormones and a unique beta chain/FSHB shown here.

The protein resides in the secreted. Functionally, together with the alpha chain CGA constitutes follitropin, the follicle-stimulating hormone, and provides its biological specificity to the hormone heterodimer. Binds FSHR, a G protein-coupled receptor, on target cells to activate downstream signaling pathways. Follitropin is involved in follicle development and spermatogenesis in reproductive organs. The chain is Follitropin subunit beta (FSHB) from Pan troglodytes (Chimpanzee).